The chain runs to 331 residues: tRNA (guanine-N(1)-)-methyltransferase (331 aa).

Low complexity-rich tracts occupy residues 77–99 (GSDT…QATR) and 107–134 (AQPG…GRAA). The interval 77-137 (GSDTTARSGS…PGAGRAASSR (61 aa)) is disordered. S-adenosyl-L-methionine is bound by residues glycine 169 and 193–198 (LGDYVL). The interval 312 to 331 (WQRCSPAPSEQAPEGARDMA) is disordered.

The protein belongs to the RNA methyltransferase TrmD family. Homodimer.

It localises to the cytoplasm. It carries out the reaction guanosine(37) in tRNA + S-adenosyl-L-methionine = N(1)-methylguanosine(37) in tRNA + S-adenosyl-L-homocysteine + H(+). Specifically methylates guanosine-37 in various tRNAs. The polypeptide is tRNA (guanine-N(1)-)-methyltransferase (Kocuria rhizophila (strain ATCC 9341 / DSM 348 / NBRC 103217 / DC2201)).